Reading from the N-terminus, the 482-residue chain is tRNA sulfurtransferase (482 aa).

The 105-residue stretch at Leu-61–Arg-165 folds into the THUMP domain. Residues Leu-183–Ile-184, Lys-265, Gly-287, and Gln-296 contribute to the ATP site. A disulfide bond links Cys-344 and Cys-456. In terms of domain architecture, Rhodanese spans Phe-404–Pro-482. Cys-456 functions as the Cysteine persulfide intermediate in the catalytic mechanism.

The protein belongs to the ThiI family.

The protein resides in the cytoplasm. The enzyme catalyses [ThiI sulfur-carrier protein]-S-sulfanyl-L-cysteine + a uridine in tRNA + 2 reduced [2Fe-2S]-[ferredoxin] + ATP + H(+) = [ThiI sulfur-carrier protein]-L-cysteine + a 4-thiouridine in tRNA + 2 oxidized [2Fe-2S]-[ferredoxin] + AMP + diphosphate. It carries out the reaction [ThiS sulfur-carrier protein]-C-terminal Gly-Gly-AMP + S-sulfanyl-L-cysteinyl-[cysteine desulfurase] + AH2 = [ThiS sulfur-carrier protein]-C-terminal-Gly-aminoethanethioate + L-cysteinyl-[cysteine desulfurase] + A + AMP + 2 H(+). The protein operates within cofactor biosynthesis; thiamine diphosphate biosynthesis. Catalyzes the ATP-dependent transfer of a sulfur to tRNA to produce 4-thiouridine in position 8 of tRNAs, which functions as a near-UV photosensor. Also catalyzes the transfer of sulfur to the sulfur carrier protein ThiS, forming ThiS-thiocarboxylate. This is a step in the synthesis of thiazole, in the thiamine biosynthesis pathway. The sulfur is donated as persulfide by IscS. In Shigella flexneri, this protein is tRNA sulfurtransferase.